The following is a 328-amino-acid chain: Malate dehydrogenase (328 aa).

11 to 17 (GAAGQIG) is a binding site for NAD(+). Substrate-binding residues include R94 and R100. NAD(+)-binding positions include N107, Q114, and 131 to 133 (VGN). The substrate site is built by N133 and R164. The Proton acceptor role is filled by H189.

Belongs to the LDH/MDH superfamily. MDH type 2 family.

It carries out the reaction (S)-malate + NAD(+) = oxaloacetate + NADH + H(+). Catalyzes the reversible oxidation of malate to oxaloacetate. This Xanthomonas campestris pv. campestris (strain B100) protein is Malate dehydrogenase.